Reading from the N-terminus, the 396-residue chain is FAD-dependent monooxygenase phomE' (396 aa).

Glutamate 3 contacts FAD. Active-site residues include arginine 158 and tyrosine 196. Aspartate 277 and glycine 290 together coordinate FAD.

Belongs to the paxM FAD-dependent monooxygenase family. In terms of assembly, monomer. The cofactor is FAD.

Its function is as follows. FAD-dependent monooxygenase; part of the gene cluster that mediates the biosynthesis of the phomopsins, a group of hexapeptide mycotoxins which infects lupins and causes lupinosis disease in livestock. The role of phomE' within the phomopsins biosynthesis pathway has still to be determined. The pathway starts with the processing of the precursor phomA by several endopeptidases including kexin proteases as well as the cluster-specific S41 family peptidase phomP1 and the oligopeptidase phomG to produce 10 identical copies of the hexapeptide Tyr-Val-Ile-Pro-Ile-Asp. After being excised from the precursor peptide, the core peptides are cyclized and modified post-translationally by enzymes encoded within the gene cluster. The timing and order of proteolysis of the phomA precursor and PTMs are still unknown. Two tyrosinase-like enzymes, phomQ1 and phomQ2, catalyze the chlorination and hydroxylation of Tyr, respectively. PhomYb, is proposed to be involved in the construction of the macrocyclic structure. The other 4 ustYa family proteins may be involved in PTMs that generate the unique structure of phomopsin A. PhomYa is required for the hydroxylation of C-beta of Tyr. PhomYc, phomYd, and phomYe are responsible for the biosynthesis of 2,3-dehydroisoleucine (dIle), 2,3-dehydroaspartic acid (dAsp), and 3,4-dehydroproline (dPro), respectively. While dIle formation by phomYc is indispensable for the installation of dAsp by phomYd, the order of the other PTMs have not been elucidated yet. Most of the biosynthetic enzymes likely have broad substrate specificity, and thus, there might be a metabolic grid from a precursor to phomopsin A. The enzyme(s) responsible for the biosynthesis of 3,4-dehydrovaline (dVal) have also not been identified yet. Finally, phomM acts as an S-adenosylmethionine-dependent alpha-N-methyltransferase that catalyzes two successive N-methylation reactions, converting N-desmethyl-phomopsin A to phomopsin A and phomopsin A further to an N,N-dimethylated congener called phomopsin E. The chain is FAD-dependent monooxygenase phomE' from Diaporthe leptostromiformis (Lupinosis disease fungus).